The primary structure comprises 160 residues: Cyclic pyranopterin monophosphate synthase (160 aa).

Residues 73 to 75 and 110 to 111 each bind substrate; these read LCH and ME. Residue Asp125 is part of the active site.

Belongs to the MoaC family. Homohexamer; trimer of dimers.

The catalysed reaction is (8S)-3',8-cyclo-7,8-dihydroguanosine 5'-triphosphate = cyclic pyranopterin phosphate + diphosphate. The protein operates within cofactor biosynthesis; molybdopterin biosynthesis. Functionally, catalyzes the conversion of (8S)-3',8-cyclo-7,8-dihydroguanosine 5'-triphosphate to cyclic pyranopterin monophosphate (cPMP). This chain is Cyclic pyranopterin monophosphate synthase, found in Pseudomonas aeruginosa (strain LESB58).